Reading from the N-terminus, the 75-residue chain is Large ribosomal subunit protein bL31 (75 aa).

The protein belongs to the bacterial ribosomal protein bL31 family. Type A subfamily. As to quaternary structure, part of the 50S ribosomal subunit.

Functionally, binds the 23S rRNA. The protein is Large ribosomal subunit protein bL31 of Rhodopseudomonas palustris (strain BisB5).